Here is a 442-residue protein sequence, read N- to C-terminus: Histidine--tRNA ligase (442 aa).

It belongs to the class-II aminoacyl-tRNA synthetase family. Homodimer.

It is found in the cytoplasm. It carries out the reaction tRNA(His) + L-histidine + ATP = L-histidyl-tRNA(His) + AMP + diphosphate + H(+). This Treponema pallidum (strain Nichols) protein is Histidine--tRNA ligase (hisS).